The following is a 394-amino-acid chain: Imidazolonepropionase (394 aa).

Fe(3+) is bound by residues His61 and His63. Zn(2+) is bound by residues His61 and His63. Arg70, Tyr133, and His164 together coordinate 4-imidazolone-5-propanoate. Tyr133 contacts N-formimidoyl-L-glutamate. His225 contributes to the Fe(3+) binding site. His225 contacts Zn(2+). Glu228 is a binding site for 4-imidazolone-5-propanoate. Asp299 serves as a coordination point for Fe(3+). Asp299 is a binding site for Zn(2+).

The protein belongs to the metallo-dependent hydrolases superfamily. HutI family. The cofactor is Zn(2+). Requires Fe(3+) as cofactor.

The protein localises to the cytoplasm. The enzyme catalyses 4-imidazolone-5-propanoate + H2O = N-formimidoyl-L-glutamate. It functions in the pathway amino-acid degradation; L-histidine degradation into L-glutamate; N-formimidoyl-L-glutamate from L-histidine: step 3/3. Its function is as follows. Catalyzes the hydrolytic cleavage of the carbon-nitrogen bond in imidazolone-5-propanoate to yield N-formimidoyl-L-glutamate. It is the third step in the universal histidine degradation pathway. This is Imidazolonepropionase from Picrophilus torridus (strain ATCC 700027 / DSM 9790 / JCM 10055 / NBRC 100828 / KAW 2/3).